The sequence spans 654 residues: Endoplasmic reticulum chaperone BiP (654 aa).

Positions methionine 1 to alanine 18 are cleaved as a signal peptide. Residues methionine 1–alanine 80 form a required for interaction with ELAPOR1 region. Glycine 36–tyrosine 39 is an ATP binding site. Serine 86 carries the post-translational modification Phosphoserine. An ATP-binding site is contributed by lysine 96. Lysine 125 bears the N6-acetyllysine mark. A nucleotide-binding (NBD) region spans residues lysine 125–lysine 280. A 3'-nitrotyrosine modification is found at tyrosine 160. Lysine 213 carries the N6-acetyllysine modification. Residue glycine 227–threonine 229 coordinates ATP. Residue lysine 271 is modified to N6-acetyllysine. Glutamate 293–serine 300 serves as a coordination point for ATP. Lysine 326 bears the N6-acetyllysine mark. A Glycyl lysine isopeptide (Lys-Gly) (interchain with G-Cter in SUMO2) cross-link involves residue lysine 352. Lysine 353 is subject to N6-acetyllysine; alternate. Lysine 353 participates in a covalent cross-link: Glycyl lysine isopeptide (Lys-Gly) (interchain with G-Cter in SUMO1); alternate. An ATP-binding site is contributed by glycine 364–arginine 367. The interdomain linker stretch occupies residues glutamine 409–valine 419. The substrate-binding (SBD) stretch occupies residues cysteine 420–threonine 500. Lysine 447 bears the N6-succinyllysine mark. Arginine 492 bears the Omega-N-methylarginine mark. Threonine 518 carries the post-translational modification O-AMP-threonine; alternate. At threonine 518 the chain carries Phosphothreonine; alternate. N6,N6,N6-trimethyllysine; by METTL21A; in vitro is present on lysine 585. Residue lysine 585 is modified to N6,N6-dimethyllysine; alternate. N6-methyllysine; alternate is present on lysine 585. At lysine 591 the chain carries N6-methyllysine. Residues lysine 633–leucine 654 are disordered. 2 positions are modified to phosphothreonine: threonine 643 and threonine 648. Residues glycine 644–leucine 654 are compositionally biased toward acidic residues. The short motif at lysine 651–leucine 654 is the Prevents secretion from ER element.

Belongs to the heat shock protein 70 family. In terms of assembly, monomer and homooligomer; homooligomerization via the interdomain linker inactivates the chaperone activity and acts as a storage of HSPA5/BiP molecules. Interacts with DNAJC1 (via J domain). Component of an EIF2 complex at least composed of CELF1/CUGBP1, CALR, CALR3, EIF2S1, EIF2S2, HSP90B1 and HSPA5. Part of a large chaperone multiprotein complex comprising DNAJB11, HSP90B1, HSPA5, HYOU, PDIA2, PDIA4, PDIA6, PPIB, SDF2L1, UGGT1 and very small amounts of ERP29, but not, or at very low levels, CALR nor CANX. Interacts with TMEM132A and TRIM21. May form a complex with ERLEC1, OS9, SEL1L and SYVN1. Interacts with DNAJC10. Interacts with DNAJB9/ERdj4; leading to recruit HSPA5/BiP to ERN1/IRE1. Interacts with ERN1/IRE1 (via luminal domain); the interaction takes place following interaction with DNAJB9/ERdj4 and leads to inactivate ERN1/IRE1, the interaction also competitively inhibits ERN1 interaction with MANF. Interacts directly with MANF (via SAP domain); the interaction inhibits ATP binding to HSPA5/BiP and subsequent nucleotide exchange. Interacts with EIF2AK3/PERK (via luminal domain); interaction leads to inactivate EIF2AK3/PERK. Interacts with MX1. Interacts with METTL23. Interacts with CEMIP; the interaction induces calcium leakage from the endoplasmic reticulum and cell migration. Interacts with PCSK4 form; the interaction takes place in the endoplasmic reticulum. Interacts with CIPC. Interacts with CCDC88B (via C-terminus); the interaction opposes ERN1-mediated JNK activation, protecting against apoptosis. Interacts with INPP5K; necessary for INPP5K localization at the endoplasmic reticulum. Interacts with MANF; the interaction is direct. Interacts with LOXL2; leading to activate the ERN1/IRE1-XBP1 pathway of the unfolded protein response. Interacts with CLU under stressed condition; interaction increases CLU protein stability; facilitates its retrotranslocation and redistribution to the mitochondria; cooperatively suppress stress-induced apoptosis by stabilizing mitochondrial membrane integrity. Interacts with CCDC47. Interacts with CLN3. Interacts with ELAPOR1; may regulate the function of HSPA5 in apoptosis and cell proliferation. Interacts with CASP7. Interacts with ILDR2; the interaction stabilizes ILDR2 expression. Interacts with ADAM7. Post-translationally, in unstressed cells, AMPylation at Thr-518 by FICD inactivates the chaperome activity: AMPylated form is locked in a relatively inert state and only weakly stimulated by J domain-containing proteins. In response to endoplasmic reticulum stress, de-AMPylation by the same protein, FICD, restores the chaperone activity.

It localises to the endoplasmic reticulum lumen. Its subcellular location is the melanosome. The protein localises to the cytoplasm. The protein resides in the cell surface. The enzyme catalyses ATP + H2O = ADP + phosphate + H(+). Its activity is regulated as follows. The chaperone activity is regulated by ATP-induced allosteric coupling of the nucleotide-binding (NBD) and substrate-binding (SBD) domains. In the ADP-bound and nucleotide-free (apo) states, the two domains have little interaction. In contrast, in the ATP-bound state the two domains are tightly coupled, which results in drastically accelerated kinetics in both binding and release of polypeptide substrates. J domain-containing co-chaperones (DNAJB9/ERdj4 or DNAJC10/ERdj5) stimulate the ATPase activity and are required for efficient substrate recognition by HSPA5/BiP. Homooligomerization inactivates participating HSPA5/BiP protomers and probably act as reservoirs to store HSPA5/BiP molecules when they are not needed by the cell. Functionally, endoplasmic reticulum chaperone that plays a key role in protein folding and quality control in the endoplasmic reticulum lumen. Involved in the correct folding of proteins and degradation of misfolded proteins via its interaction with DNAJC10/ERdj5, probably to facilitate the release of DNAJC10/ERdj5 from its substrate. Acts as a key repressor of the EIF2AK3/PERK and ERN1/IRE1-mediated unfolded protein response (UPR). In the unstressed endoplasmic reticulum, recruited by DNAJB9/ERdj4 to the luminal region of ERN1/IRE1, leading to disrupt the dimerization of ERN1/IRE1, thereby inactivating ERN1/IRE1. Also binds and inactivates EIF2AK3/PERK in unstressed cells. Accumulation of misfolded protein in the endoplasmic reticulum causes release of HSPA5/BiP from ERN1/IRE1 and EIF2AK3/PERK, allowing their homodimerization and subsequent activation. Plays an auxiliary role in post-translational transport of small presecretory proteins across endoplasmic reticulum (ER). May function as an allosteric modulator for SEC61 channel-forming translocon complex, likely cooperating with SEC62 to enable the productive insertion of these precursors into SEC61 channel. Appears to specifically regulate translocation of precursors having inhibitory residues in their mature region that weaken channel gating. May also play a role in apoptosis and cell proliferation. In Pongo abelii (Sumatran orangutan), this protein is Endoplasmic reticulum chaperone BiP.